The following is a 350-amino-acid chain: tRNA uridine(34) hydroxylase (350 aa).

The Rhodanese domain maps to 146 to 240 (DDPDALFIDM…YARKAREQGL (95 aa)). Catalysis depends on Cys-200, which acts as the Cysteine persulfide intermediate.

Belongs to the TrhO family.

The catalysed reaction is uridine(34) in tRNA + AH2 + O2 = 5-hydroxyuridine(34) in tRNA + A + H2O. Catalyzes oxygen-dependent 5-hydroxyuridine (ho5U) modification at position 34 in tRNAs, the first step in 5-carboxymethoxyuridine (cmo5U) biosynthesis. May be part of an alternate pathway, which is able to bypass cmo5U biogenesis in a subset of tRNAs under aerobic conditions. In Escherichia coli O157:H7, this protein is tRNA uridine(34) hydroxylase.